The chain runs to 270 residues: Triosephosphate isomerase (270 aa).

27 to 29 (NWK) lines the substrate pocket. Catalysis depends on His114, which acts as the Electrophile. The active-site Proton acceptor is the Glu184. Substrate contacts are provided by residues Gly190, Ser230, and 251 to 252 (GG).

It belongs to the triosephosphate isomerase family. Homodimer.

It is found in the cytoplasm. It catalyses the reaction D-glyceraldehyde 3-phosphate = dihydroxyacetone phosphate. Its pathway is carbohydrate biosynthesis; gluconeogenesis. It participates in carbohydrate degradation; glycolysis; D-glyceraldehyde 3-phosphate from glycerone phosphate: step 1/1. In terms of biological role, involved in the gluconeogenesis. Catalyzes stereospecifically the conversion of dihydroxyacetone phosphate (DHAP) to D-glyceraldehyde-3-phosphate (G3P). The chain is Triosephosphate isomerase from Chlamydia muridarum (strain MoPn / Nigg).